The chain runs to 103 residues: Large ribosomal subunit protein bL21 (103 aa).

It belongs to the bacterial ribosomal protein bL21 family. In terms of assembly, part of the 50S ribosomal subunit. Contacts protein L20.

Its function is as follows. This protein binds to 23S rRNA in the presence of protein L20. The polypeptide is Large ribosomal subunit protein bL21 (Laribacter hongkongensis (strain HLHK9)).